The chain runs to 478 residues: Cysteine--tRNA ligase (478 aa).

Cys-29 lines the Zn(2+) pocket. The short motif at 31 to 41 is the 'HIGH' region element; sequence ATVQSIPHIGH. The Zn(2+) site is built by Cys-207, His-232, and Glu-236. The 'KMSKS' region motif lies at 263–267; sequence KMSKS. An ATP-binding site is contributed by Lys-266.

It belongs to the class-I aminoacyl-tRNA synthetase family. In terms of assembly, monomer. Zn(2+) serves as cofactor.

It localises to the cytoplasm. It catalyses the reaction tRNA(Cys) + L-cysteine + ATP = L-cysteinyl-tRNA(Cys) + AMP + diphosphate. The protein is Cysteine--tRNA ligase of Corynebacterium jeikeium (strain K411).